The sequence spans 359 residues: Acidic skeletal organic matrix protein (359 aa).

The N-terminal stretch at 1–26 (MLAPRLAFVLLLSSYFGSILITSVES) is a signal peptide. 2 disordered regions span residues 60-83 (FEED…EDFD) and 224-254 (SEAE…DPNE). The stretch at 66–89 (DDDDEDNEESENEVEDFDDENALS) forms a coiled coil.

As to expression, component of the acid-insoluble and acid-soluble organic matrix of the aragonitic skeleton (at protein level).

Its subcellular location is the secreted. In Acropora millepora (Staghorn coral), this protein is Acidic skeletal organic matrix protein.